The following is a 31-amino-acid chain: Bacteriocin lactocin-705 (31 aa).

In terms of biological role, antibacterial activity against several lactic acid bacteria, Listeria, Streptococci, etc. The polypeptide is Bacteriocin lactocin-705 (Lacticaseibacillus paracasei (Lactobacillus paracasei)).